A 146-amino-acid polypeptide reads, in one-letter code: Hemoglobin subunit beta-2 (146 aa).

An N-acetylvaline modification is found at Val-1. Residues 2–146 enclose the Globin domain; the sequence is HLHGDEKAAV…VASALAHKYH (145 aa). Lys-17 bears the N6-succinyllysine mark. Ser-44 bears the Phosphoserine mark. An N6-succinyllysine modification is found at Lys-59. 2 residues coordinate heme b: His-63 and His-92. Arg-104 is modified (asymmetric dimethylarginine). The residue at position 123 (Thr-123) is a Phosphothreonine.

Belongs to the globin family. As to quaternary structure, heterotetramer of two alpha chains and two beta chains. Red blood cells.

In terms of biological role, involved in oxygen transport from the lung to the various peripheral tissues. The polypeptide is Hemoglobin subunit beta-2 (HBB2) (Tapirus terrestris (Lowland tapir)).